A 71-amino-acid polypeptide reads, in one-letter code: Brevinin-1V (71 aa).

Positions M1–C22 are cleaved as a signal peptide. Residues E23–E45 constitute a propeptide that is removed on maturation. An intrachain disulfide couples C65 to C71.

The protein belongs to the frog skin active peptide (FSAP) family. Brevinin subfamily. As to expression, expressed by the skin glands.

The protein resides in the secreted. Its function is as follows. Has antimicrobial activity against Gram-positive bacteria and fungi but has weak or no activity against a range of Gram-negative bacteria except P.faecalis. Active against the Gram-positive bacteria E.faecium 091299 (MIC=37.5 uM), S.aureus ATCC 25923 (MIC=2.4 uM), S.carnosus KHS (MIC=19 uM), B.licheniformis X39 (MIC=2.4 uM) and R.rhodochrous X15 (MIC=1.2 uM) and a lower activity against E.faecalis 981 (MIC=75 uM). Active against the Gram-negative bacterium P.faecalis X29 (MIC=9.5 uM) is virtually inactive against E.coli ATCC 25922 (MIC=150 uM), and inactive against P.aeruginosa and S.typhi. Has antifungal activity against C.albicans ATCC 2002 (MIC=9.5 uM) and is also active against the slime mold 090223 (MIC=1.2 uM). Has low hemolytic activity against human erythrocytes (LC(50)=75 uM). The protein is Brevinin-1V of Odorrana hainanensis (Odor frog).